The primary structure comprises 92 residues: MAKRTKKVGIVGKYGTRYGASLRKMVKKIEISQHAKYTCSFCGKTKMKRKAVGIWHCGSCMKTVAGGAWTYNTTSAVTVKSAIRRLKELKDQ.

Zn(2+) is bound by residues cysteine 39, cysteine 42, cysteine 57, and cysteine 60. A C4-type zinc finger spans residues cysteine 39–cysteine 60.

It belongs to the eukaryotic ribosomal protein eL43 family. As to quaternary structure, component of the large ribosomal subunit.

Its subcellular location is the cytoplasm. Functionally, component of the large ribosomal subunit. The ribosome is a large ribonucleoprotein complex responsible for the synthesis of proteins in the cell. This chain is Large ribosomal subunit protein eL43 (RPL37A), found in Gallus gallus (Chicken).